The following is a 189-amino-acid chain: Transcription factor FapR (189 aa).

It belongs to the FapR family.

Its function is as follows. Transcriptional factor involved in regulation of membrane lipid biosynthesis by repressing genes involved in fatty acid and phospholipid metabolism. This is Transcription factor FapR from Listeria innocua serovar 6a (strain ATCC BAA-680 / CLIP 11262).